The following is a 194-amino-acid chain: RNA polymerase II subunit A C-terminal domain phosphatase SSU72 like protein 4 (194 aa).

It belongs to the SSU72 phosphatase family.

Its subcellular location is the nucleus. It catalyses the reaction O-phospho-L-seryl-[protein] + H2O = L-seryl-[protein] + phosphate. It carries out the reaction O-phospho-L-threonyl-[protein] + H2O = L-threonyl-[protein] + phosphate. Protein phosphatase that catalyzes the dephosphorylation of the C-terminal domain of RNA polymerase II. Plays a role in RNA processing and termination. The protein is RNA polymerase II subunit A C-terminal domain phosphatase SSU72 like protein 4 of Homo sapiens (Human).